Consider the following 190-residue polypeptide: Transcription antitermination protein NusB (190 aa).

Residues 158–190 (AGTSEDHVPQREPAAGQLGQDDSNGGQVAAVCR) form a disordered region.

The protein belongs to the NusB family.

Functionally, involved in transcription antitermination. Required for transcription of ribosomal RNA (rRNA) genes. Binds specifically to the boxA antiterminator sequence of the ribosomal RNA (rrn) operons. This chain is Transcription antitermination protein NusB, found in Mycobacterium leprae (strain TN).